Reading from the N-terminus, the 118-residue chain is Large ribosomal subunit protein uL24 (118 aa).

It belongs to the universal ribosomal protein uL24 family. In terms of assembly, part of the 50S ribosomal subunit.

Its function is as follows. One of two assembly initiator proteins, it binds directly to the 5'-end of the 23S rRNA, where it nucleates assembly of the 50S subunit. One of the proteins that surrounds the polypeptide exit tunnel on the outside of the subunit. This is Large ribosomal subunit protein uL24 from Prochlorococcus marinus (strain SARG / CCMP1375 / SS120).